We begin with the raw amino-acid sequence, 234 residues long: Phosphoribosylaminoimidazole-succinocarboxamide synthase (234 aa).

It belongs to the SAICAR synthetase family.

The catalysed reaction is 5-amino-1-(5-phospho-D-ribosyl)imidazole-4-carboxylate + L-aspartate + ATP = (2S)-2-[5-amino-1-(5-phospho-beta-D-ribosyl)imidazole-4-carboxamido]succinate + ADP + phosphate + 2 H(+). It participates in purine metabolism; IMP biosynthesis via de novo pathway; 5-amino-1-(5-phospho-D-ribosyl)imidazole-4-carboxamide from 5-amino-1-(5-phospho-D-ribosyl)imidazole-4-carboxylate: step 1/2. This is Phosphoribosylaminoimidazole-succinocarboxamide synthase from Clostridium botulinum (strain Langeland / NCTC 10281 / Type F).